Consider the following 1097-residue polypeptide: DNA-directed RNA polymerase subunit beta (1097 aa).

A disordered region spans residues 1072 to 1097; sequence QDINPRRNTPSRPTYESLGTSEYEED. Over residues 1077 to 1091 the composition is skewed to polar residues; the sequence is RRNTPSRPTYESLGT.

This sequence belongs to the RNA polymerase beta chain family. In terms of assembly, in cyanobacteria the RNAP catalytic core is composed of 2 alpha, 1 beta, 1 beta', 1 gamma and 1 omega subunit. When a sigma factor is associated with the core the holoenzyme is formed, which can initiate transcription.

The catalysed reaction is RNA(n) + a ribonucleoside 5'-triphosphate = RNA(n+1) + diphosphate. Functionally, DNA-dependent RNA polymerase catalyzes the transcription of DNA into RNA using the four ribonucleoside triphosphates as substrates. The protein is DNA-directed RNA polymerase subunit beta of Prochlorococcus marinus (strain MIT 9301).